We begin with the raw amino-acid sequence, 353 residues long: Jasmonate-induced oxygenase 4 (353 aa).

Residues 202–302 (VGASLRTNFY…RVSLAFFYNP (101 aa)) enclose the Fe2OG dioxygenase domain. Jasmonate is bound at residue arginine 207. 2-oxoglutarate-binding residues include asparagine 209 and tyrosine 211. Residues histidine 226, aspartate 228, and histidine 283 each contribute to the Fe cation site. Arginine 293 and serine 295 together coordinate 2-oxoglutarate. Residues arginine 332 and arginine 336 each coordinate jasmonate.

This sequence belongs to the iron/ascorbate-dependent oxidoreductase family. The cofactor is L-ascorbate. Requires Fe(2+) as cofactor.

It carries out the reaction jasmonate + 2-oxoglutarate + O2 = (1R,2R)-12-hydroxyjasmonate + succinate + CO2. Its function is as follows. 2-oxoglutarate-dependent dioxygenase involved in the oxidation of jasmonate (JA), a stress-induced phytohormone synthesized in response to attack by pathogens and herbivores, which triggers the activation of defense responses via the JA-mediated signaling pathway. Converts JA to 12-hydroxyjasmonate (12OH-JA), an inactive form of JA. Is specific to free JA, and cannot oxidize the bioactive form jasmonoyl-L-isoleucine (JA-Ile) or other JA-amino acid conjugates. Prevents over-accumulation of JA and indirectly its bioactive form JA-Ile under stress response. Acts as a negative regulator of JA-mediated defense signaling, by contributing to 12OH-JA accumulation, which represses JA defense responses upon infection by the fungal pathogen Botrytis cinerea. Acts as a negative regulator of JA-mediated defense responses upon infestation by the herbivorous caterpillar Mamestra brassicae. The protein is Jasmonate-induced oxygenase 4 of Arabidopsis thaliana (Mouse-ear cress).